The sequence spans 339 residues: Phenylalanine--tRNA ligase alpha subunit (339 aa).

E250 serves as a coordination point for Mg(2+).

It belongs to the class-II aminoacyl-tRNA synthetase family. Phe-tRNA synthetase alpha subunit type 1 subfamily. As to quaternary structure, tetramer of two alpha and two beta subunits. The cofactor is Mg(2+).

Its subcellular location is the cytoplasm. The catalysed reaction is tRNA(Phe) + L-phenylalanine + ATP = L-phenylalanyl-tRNA(Phe) + AMP + diphosphate + H(+). This Flavobacterium psychrophilum (strain ATCC 49511 / DSM 21280 / CIP 103535 / JIP02/86) protein is Phenylalanine--tRNA ligase alpha subunit.